The following is a 331-amino-acid chain: NmrA-like family domain-containing oxidoreductase himF (331 aa).

Residues 8-13 (GATGNQ), 34-38 (RNAES), 55-56 (DG), 76-78 (TNG), Lys-133, and 155-167 (WFFETFLEPQMAA) each bind NADP(+).

It belongs to the NmrA-type oxidoreductase family.

Its pathway is secondary metabolite biosynthesis. Functionally, nmrA-like family domain-containing oxidoreductase; part of the him gene cluster that mediates the biosynthesis of himeic acid A, a ubiquitin-activating enzyme (E1) inhibitor. First, himA, together with the trans-enoyl reductase himH, catalyzes the formation of apolyketide chain, which is then condensed with leucine by the NRPS activity of himA. Dieckmann cyclization and release from himA gives a tetramic acid intermediate as the product of himA PKS-NRPS. HimG then catalyzes alpha-oxidation of the tetramic acid ring, with a subsequent rearrangement to yield apyrone intermediate. Two terminal methyl groups of polyketide and amide side chains are oxidized to carboxylic acids by himC cytochrome P450 monooxygenase to form himeic acid A. Himeic acid A is further converted to himeic acid B and C during culture growth. No gene responsible for pyrone to pyridone conversion was found in the him gene cluster and himeic acid A is non-enzymatically converted to himeic acid C by the incorporation of an ammonium nitrogen atom in a pH5 buffer, and to himeic acid B at a conversion ratio of 50% during incubation in MeOH for 5 days. The chain is NmrA-like family domain-containing oxidoreductase himF from Aspergillus japonicus.